A 361-amino-acid chain; its full sequence is S-adenosylmethionine:tRNA ribosyltransferase-isomerase (361 aa).

It belongs to the QueA family. As to quaternary structure, monomer.

Its subcellular location is the cytoplasm. It catalyses the reaction 7-aminomethyl-7-carbaguanosine(34) in tRNA + S-adenosyl-L-methionine = epoxyqueuosine(34) in tRNA + adenine + L-methionine + 2 H(+). The protein operates within tRNA modification; tRNA-queuosine biosynthesis. Its function is as follows. Transfers and isomerizes the ribose moiety from AdoMet to the 7-aminomethyl group of 7-deazaguanine (preQ1-tRNA) to give epoxyqueuosine (oQ-tRNA). The chain is S-adenosylmethionine:tRNA ribosyltransferase-isomerase from Actinobacillus pleuropneumoniae serotype 3 (strain JL03).